We begin with the raw amino-acid sequence, 272 residues long: Shikimate dehydrogenase (NADP(+)) (272 aa).

Shikimate is bound by residues 14 to 16 (SKS) and Thr-61. Lys-65 functions as the Proton acceptor in the catalytic mechanism. Residue Glu-77 participates in NADP(+) binding. The shikimate site is built by Asn-86 and Asp-102. NADP(+) is bound by residues 126 to 130 (GAGGA), 149 to 154 (NRTVFR), and Met-213. Tyr-215 is a shikimate binding site. Gly-237 lines the NADP(+) pocket.

This sequence belongs to the shikimate dehydrogenase family. In terms of assembly, homodimer.

The catalysed reaction is shikimate + NADP(+) = 3-dehydroshikimate + NADPH + H(+). The protein operates within metabolic intermediate biosynthesis; chorismate biosynthesis; chorismate from D-erythrose 4-phosphate and phosphoenolpyruvate: step 4/7. Functionally, involved in the biosynthesis of the chorismate, which leads to the biosynthesis of aromatic amino acids. Catalyzes the reversible NADPH linked reduction of 3-dehydroshikimate (DHSA) to yield shikimate (SA). The chain is Shikimate dehydrogenase (NADP(+)) from Escherichia coli O127:H6 (strain E2348/69 / EPEC).